The following is a 187-amino-acid chain: Small monomeric GTPase RhbA (187 aa).

GDP is bound by residues Ser-17, Val-18, Gly-19, Lys-20, Ser-21, Ser-22, Val-33, and Glu-34. Residue Ser-17 coordinates GTP. Residues Gly-19, Lys-20, Ser-21, Ser-22, and Val-33 each coordinate GTP. Residue Ser-21 coordinates Mg(2+). GTP is bound by residues Tyr-36, Thr-39, Asn-120, Asp-123, and Ala-152. The short motif at 36 to 44 (YYPTIENTF) is the Effector region element. A Mg(2+)-binding site is contributed by Thr-39. Asn-120, Asp-123, and Ala-152 together coordinate GDP. Cys-184 is lipidated: S-farnesyl cysteine.

The protein belongs to the small GTPase superfamily. Rheb family. Post-translationally, farnesylation is important for efficiently activating mTORC1-mediated signaling.

The protein resides in the cell membrane. It catalyses the reaction GTP + H2O = GDP + phosphate + H(+). With respect to regulation, alternates between an inactive form bound to GDP and an active form bound to GTP. Its function is as follows. Small GTPase that acts as an allosteric activator of the canonical TOR pathway, an evolutionarily conserved central nutrient sensor that stimulates anabolic reactions and macromolecule biosynthesis to promote cellular biomass generation and growth. Plays a role in virulence. The polypeptide is Small monomeric GTPase RhbA (Aspergillus fumigatus (strain ATCC MYA-4609 / CBS 101355 / FGSC A1100 / Af293) (Neosartorya fumigata)).